We begin with the raw amino-acid sequence, 347 residues long: Heat-inducible transcription repressor HrcA (347 aa).

Belongs to the HrcA family.

Functionally, negative regulator of class I heat shock genes (grpE-dnaK-dnaJ and groELS operons). Prevents heat-shock induction of these operons. The polypeptide is Heat-inducible transcription repressor HrcA (Nocardia farcinica (strain IFM 10152)).